Here is a 283-residue protein sequence, read N- to C-terminus: Probable endonuclease 4 (283 aa).

9 residues coordinate Zn(2+): histidine 69, histidine 113, glutamate 148, aspartate 182, histidine 185, histidine 217, aspartate 230, histidine 232, and glutamate 262.

Belongs to the AP endonuclease 2 family. Zn(2+) is required as a cofactor.

It carries out the reaction Endonucleolytic cleavage to 5'-phosphooligonucleotide end-products.. In terms of biological role, endonuclease IV plays a role in DNA repair. It cleaves phosphodiester bonds at apurinic or apyrimidinic (AP) sites, generating a 3'-hydroxyl group and a 5'-terminal sugar phosphate. The chain is Probable endonuclease 4 from Bifidobacterium longum (strain NCC 2705).